The sequence spans 449 residues: Phosphoglucosamine mutase (449 aa).

The Phosphoserine intermediate role is filled by S100. Mg(2+) is bound by residues S100, D241, D243, and D245. S100 carries the phosphoserine modification.

It belongs to the phosphohexose mutase family. Requires Mg(2+) as cofactor. Activated by phosphorylation.

It carries out the reaction alpha-D-glucosamine 1-phosphate = D-glucosamine 6-phosphate. Functionally, catalyzes the conversion of glucosamine-6-phosphate to glucosamine-1-phosphate. This chain is Phosphoglucosamine mutase, found in Clostridium botulinum (strain Langeland / NCTC 10281 / Type F).